The following is a 219-amino-acid chain: 3-dehydroquinate dehydratase (219 aa).

3-dehydroquinate-binding positions include 28–30 (ELR) and R61. The active-site Proton donor/acceptor is the H116. The active-site Schiff-base intermediate with substrate is the K142. Positions 180 and 203 each coordinate 3-dehydroquinate.

It belongs to the type-I 3-dehydroquinase family. Homodimer.

It catalyses the reaction 3-dehydroquinate = 3-dehydroshikimate + H2O. It participates in metabolic intermediate biosynthesis; chorismate biosynthesis; chorismate from D-erythrose 4-phosphate and phosphoenolpyruvate: step 3/7. In terms of biological role, involved in the third step of the chorismate pathway, which leads to the biosynthesis of aromatic amino acids. Catalyzes the cis-dehydration of 3-dehydroquinate (DHQ) and introduces the first double bond of the aromatic ring to yield 3-dehydroshikimate. In Aquifex aeolicus (strain VF5), this protein is 3-dehydroquinate dehydratase.